The chain runs to 183 residues: Adenylate kinase (183 aa).

Residue 12–17 coordinates ATP; that stretch reads GAGKGT. The interval 32 to 61 is NMP; that stretch reads STGDLLRAEVSAGSALGQEAESVMNRGELV. AMP contacts are provided by residues threonine 33, arginine 38, 59–61, 86–89, and glutamine 93; these read ELV and GFPR. The tract at residues 127-133 is LID; sequence SRGRDDD. Arginine 128 is a binding site for ATP. Arginine 130 and arginine 141 together coordinate AMP. Glycine 169 is an ATP binding site.

Belongs to the adenylate kinase family. As to quaternary structure, monomer.

The protein localises to the cytoplasm. It carries out the reaction AMP + ATP = 2 ADP. Its pathway is purine metabolism; AMP biosynthesis via salvage pathway; AMP from ADP: step 1/1. Its function is as follows. Catalyzes the reversible transfer of the terminal phosphate group between ATP and AMP. Plays an important role in cellular energy homeostasis and in adenine nucleotide metabolism. This Synechococcus sp. (strain CC9311) protein is Adenylate kinase.